Consider the following 75-residue polypeptide: Small ribosomal subunit protein bS18 (75 aa).

Belongs to the bacterial ribosomal protein bS18 family. In terms of assembly, part of the 30S ribosomal subunit. Forms a tight heterodimer with protein bS6.

Binds as a heterodimer with protein bS6 to the central domain of the 16S rRNA, where it helps stabilize the platform of the 30S subunit. In Glaesserella parasuis serovar 5 (strain SH0165) (Haemophilus parasuis), this protein is Small ribosomal subunit protein bS18.